Here is a 226-residue protein sequence, read N- to C-terminus: ATP synthase F(0) complex subunit a (226 aa).

Transmembrane regions (helical) follow at residues 12–32 (PTIL…LLIP), 68–88 (WSLM…LGLL), 97–117 (QLSM…ATGF), 138–158 (IPML…ALAV), 164–184 (ITAG…LSTI), and 200–222 (TTLE…SLYL).

This sequence belongs to the ATPase A chain family. In terms of assembly, component of the ATP synthase complex composed at least of ATP5F1A/subunit alpha, ATP5F1B/subunit beta, ATP5MC1/subunit c (homooctomer), MT-ATP6/subunit a, MT-ATP8/subunit 8, ATP5ME/subunit e, ATP5MF/subunit f, ATP5MG/subunit g, ATP5MK/subunit k, ATP5MJ/subunit j, ATP5F1C/subunit gamma, ATP5F1D/subunit delta, ATP5F1E/subunit epsilon, ATP5PF/subunit F6, ATP5PB/subunit b, ATP5PD/subunit d, ATP5PO/subunit OSCP. ATP synthase complex consists of a soluble F(1) head domain (subunits alpha(3) and beta(3)) - the catalytic core - and a membrane F(0) domain - the membrane proton channel (subunits c, a, 8, e, f, g, k and j). These two domains are linked by a central stalk (subunits gamma, delta, and epsilon) rotating inside the F1 region and a stationary peripheral stalk (subunits F6, b, d, and OSCP). Interacts with DNAJC30; interaction is direct.

It is found in the mitochondrion inner membrane. It catalyses the reaction H(+)(in) = H(+)(out). Functionally, subunit a, of the mitochondrial membrane ATP synthase complex (F(1)F(0) ATP synthase or Complex V) that produces ATP from ADP in the presence of a proton gradient across the membrane which is generated by electron transport complexes of the respiratory chain. ATP synthase complex consist of a soluble F(1) head domain - the catalytic core - and a membrane F(1) domain - the membrane proton channel. These two domains are linked by a central stalk rotating inside the F(1) region and a stationary peripheral stalk. During catalysis, ATP synthesis in the catalytic domain of F(1) is coupled via a rotary mechanism of the central stalk subunits to proton translocation. With the subunit c (ATP5MC1), forms the proton-conducting channel in the F(0) domain, that contains two crucial half-channels (inlet and outlet) that facilitate proton movement from the mitochondrial intermembrane space (IMS) into the matrix. Protons are taken up via the inlet half-channel and released through the outlet half-channel, following a Grotthuss mechanism. The polypeptide is ATP synthase F(0) complex subunit a (Hylobates lar (Lar gibbon)).